The primary structure comprises 833 residues: Leucine--tRNA ligase (833 aa).

Positions 41–52 (PYPSGAGLHVGH) match the 'HIGH' region motif. A 'KMSKS' region motif is present at residues 610-614 (KMSKS). Residue lysine 613 coordinates ATP.

Belongs to the class-I aminoacyl-tRNA synthetase family.

It is found in the cytoplasm. The catalysed reaction is tRNA(Leu) + L-leucine + ATP = L-leucyl-tRNA(Leu) + AMP + diphosphate. The protein is Leucine--tRNA ligase of Streptococcus pneumoniae serotype 19F (strain G54).